Here is a 149-residue protein sequence, read N- to C-terminus: Large ribosomal subunit protein uL13 (149 aa).

This sequence belongs to the universal ribosomal protein uL13 family. As to quaternary structure, part of the 50S ribosomal subunit.

Its function is as follows. This protein is one of the early assembly proteins of the 50S ribosomal subunit, although it is not seen to bind rRNA by itself. It is important during the early stages of 50S assembly. This is Large ribosomal subunit protein uL13 from Saccharolobus solfataricus (strain ATCC 35092 / DSM 1617 / JCM 11322 / P2) (Sulfolobus solfataricus).